The primary structure comprises 324 residues: NAD kinase (324 aa).

The active-site Proton acceptor is the Asp89. Residues 89 to 90 (DG), Arg94, 163 to 164 (NE), Asp193, and 204 to 209 (TAYAFS) contribute to the NAD(+) site.

It belongs to the NAD kinase family. The cofactor is a divalent metal cation.

It localises to the cytoplasm. The catalysed reaction is NAD(+) + ATP = ADP + NADP(+) + H(+). Involved in the regulation of the intracellular balance of NAD and NADP, and is a key enzyme in the biosynthesis of NADP. Catalyzes specifically the phosphorylation on 2'-hydroxyl of the adenosine moiety of NAD to yield NADP. The chain is NAD kinase from Nocardia farcinica (strain IFM 10152).